Reading from the N-terminus, the 403-residue chain is D-alanyl-D-alanine carboxypeptidase DacA (403 aa).

The first 29 residues, 1 to 29 (MNTIFSARIMKRLALTTALCTAFISAAHA), serve as a signal peptide directing secretion. Residue Ser-73 is the Acyl-ester intermediate of the active site. The Proton acceptor role is filled by Lys-76. Ser-139 is an active-site residue. Lys-242 is a binding site for substrate.

It belongs to the peptidase S11 family.

It is found in the cell inner membrane. It carries out the reaction Preferential cleavage: (Ac)2-L-Lys-D-Ala-|-D-Ala. Also transpeptidation of peptidyl-alanyl moieties that are N-acyl substituents of D-alanine.. Its pathway is cell wall biogenesis; peptidoglycan biosynthesis. Functionally, removes C-terminal D-alanyl residues from sugar-peptide cell wall precursors. The sequence is that of D-alanyl-D-alanine carboxypeptidase DacA (dacA) from Escherichia coli O157:H7.